The following is a 266-amino-acid chain: 3-methyl-2-oxobutanoate hydroxymethyltransferase (266 aa).

Positions 45 and 84 each coordinate Mg(2+). Residues 45 to 46 (DS), Asp84, and Lys112 each bind 3-methyl-2-oxobutanoate. Position 114 (Glu114) interacts with Mg(2+). The active-site Proton acceptor is the Glu181.

This sequence belongs to the PanB family. As to quaternary structure, homodecamer; pentamer of dimers. It depends on Mg(2+) as a cofactor.

The protein resides in the cytoplasm. The catalysed reaction is 3-methyl-2-oxobutanoate + (6R)-5,10-methylene-5,6,7,8-tetrahydrofolate + H2O = 2-dehydropantoate + (6S)-5,6,7,8-tetrahydrofolate. It participates in cofactor biosynthesis; (R)-pantothenate biosynthesis; (R)-pantoate from 3-methyl-2-oxobutanoate: step 1/2. In terms of biological role, catalyzes the reversible reaction in which hydroxymethyl group from 5,10-methylenetetrahydrofolate is transferred onto alpha-ketoisovalerate to form ketopantoate. This is 3-methyl-2-oxobutanoate hydroxymethyltransferase from Pseudomonas syringae pv. syringae (strain B728a).